Reading from the N-terminus, the 477-residue chain is UDP-N-acetylmuramate--L-alanine ligase (477 aa).

112–118 (GAHGKTT) is a binding site for ATP.

It belongs to the MurCDEF family.

It localises to the cytoplasm. The catalysed reaction is UDP-N-acetyl-alpha-D-muramate + L-alanine + ATP = UDP-N-acetyl-alpha-D-muramoyl-L-alanine + ADP + phosphate + H(+). It participates in cell wall biogenesis; peptidoglycan biosynthesis. In terms of biological role, cell wall formation. The sequence is that of UDP-N-acetylmuramate--L-alanine ligase from Delftia acidovorans (strain DSM 14801 / SPH-1).